We begin with the raw amino-acid sequence, 359 residues long: Nicotinate-nucleotide--dimethylbenzimidazole phosphoribosyltransferase (359 aa).

The Proton acceptor role is filled by glutamate 318.

It belongs to the CobT family. As to quaternary structure, homodimer.

The enzyme catalyses 5,6-dimethylbenzimidazole + nicotinate beta-D-ribonucleotide = alpha-ribazole 5'-phosphate + nicotinate + H(+). It functions in the pathway nucleoside biosynthesis; alpha-ribazole biosynthesis; alpha-ribazole from 5,6-dimethylbenzimidazole: step 1/2. Catalyzes the synthesis of alpha-ribazole-5'-phosphate from nicotinate mononucleotide (NAMN) and 5,6-dimethylbenzimidazole (DMB). This chain is Nicotinate-nucleotide--dimethylbenzimidazole phosphoribosyltransferase, found in Shigella sonnei (strain Ss046).